Consider the following 985-residue polypeptide: Rho guanine nucleotide exchange factor 2 (985 aa).

The segment at 1–32 is disordered; sequence MSRIESLTRARIDRSKEQATKTREKEKMKEAK. The Phorbol-ester/DAG-type zinc-finger motif lies at 39–86; that stretch reads GHLFTTISVSGMTMCYACNKSITAKEALICPTCNVTIHNRCKDTLANC. Phosphoserine occurs at positions 109, 122, 129, 133, and 137. The interaction with DYNLT1 stretch occupies residues 131–161; it reads RQSLLGSRRGLSSLSLAKSVSTTNIAGHFND. Ser143 bears the Phosphoserine; by PAK4 mark. Phosphoserine is present on residues Ser151, Ser163, Ser172, Ser174, and Ser177. A DH domain is found at 236-433; it reads KKQDVIYELI…KELLSNVDQD (198 aa). Lys354 carries the post-translational modification N6-acetyllysine. The PH domain occupies 473–572; the sequence is KLIHEGCLLW…WIRVIQQSVR (100 aa). Residues 591 to 619 adopt a coiled-coil conformation; sequence LRRIKTKLQQKNQALVELLQKNVELFAEM. Residues Ser646 and Ser649 each carry the phosphoserine modification. The residue at position 680 (Thr680) is a Phosphothreonine; by MAPK1 or MAPK3. Ser692, Ser710, and Ser781 each carry phosphoserine. Position 795 is a phosphothreonine (Thr795). A coiled-coil region spans residues 797–866; sequence EKQATELALL…RQLAALGQNE (70 aa). Ser885 carries the phosphoserine modification. 2 disordered regions span residues 890–909 and 918–985; these read DALYLSFNPPQPSRGHDRLD and HRPF…ASES. Tyr893 carries the phosphotyrosine modification. The residue at position 895 (Ser895) is a Phosphoserine; by PAK4. Over residues 919-938 the composition is skewed to basic and acidic residues; sequence RPFDDREAQELGSPEDRLQD. Ser931, Ser939, and Ser940 each carry phosphoserine. The span at 940 to 949 shows a compositional bias: acidic residues; the sequence is SDPDTGSEEE. Thr944 bears the Phosphothreonine mark. Phosphoserine occurs at positions 946, 951, 952, 955, and 959.

Found in a complex composed at least of ARHGEF2, NOD2 and RIPK2. Interacts with RIPK2; the interaction mediates tyrosine phosphorylation of RIPK2 by Src kinase CSK. Interacts with RIPK1 and RIPK3. Interacts with YWHAZ/14-3-3 zeta; when phosphorylated at Ser-885. Interacts with the kinases PAK4, AURKA and MAPK1. Interacts with RHOA and RAC1. Interacts with NOD1. Interacts (via the N- terminal zinc finger) with CAPN6 (via domain II). Interacts with DYNLT1. Post-translationally, phosphorylation of Ser-885 by PAK1 induces binding to protein YWHAZ, promoting its relocation to microtubules and the inhibition of its activity. Phosphorylated by AURKA and CDK1 during mitosis, which negatively regulates its activity. Phosphorylation by MAPK1 or MAPK3 increases nucleotide exchange activity. Phosphorylation by PAK4 releases GEF-H1 from the microtubules. Phosphorylated on serine, threonine and tyrosine residues in a RIPK2-dependent manner. As to expression, ubiquitous, with the exception of liver tissue. Levels are high in hemopoietic tissues (thymus, spleen, bone marrow) as well as in kidney and lung. Expressed in the germinal zones of both the neocortex and the cerebellum and in the pontine gray nuclei.

It localises to the cytoplasm. Its subcellular location is the cytoskeleton. It is found in the cell junction. The protein localises to the tight junction. The protein resides in the golgi apparatus. It localises to the spindle. Its subcellular location is the cytoplasmic vesicle. Activates Rho-GTPases by promoting the exchange of GDP for GTP. May be involved in epithelial barrier permeability, cell motility and polarization, dendritic spine morphology, antigen presentation, leukemic cell differentiation, cell cycle regulation, innate immune response, and cancer. Binds Rac-GTPases, but does not seem to promote nucleotide exchange activity toward Rac-GTPases. May stimulate instead the cortical activity of Rac. Inactive toward CDC42, TC10, or Ras-GTPases. Forms an intracellular sensing system along with NOD1 for the detection of microbial effectors during cell invasion by pathogens. Involved in innate immune signaling transduction pathway promoting cytokine IL6/interleukin-6 and TNF-alpha secretion in macrophage upon stimulation by bacterial peptidoglycans; acts as a signaling intermediate between NOD2 receptor and RIPK2 kinase. Contributes to the tyrosine phosphorylation of RIPK2 through Src tyrosine kinase leading to NF-kappaB activation by NOD2. Overexpression activates Rho-, but not Rac-GTPases, and increases paracellular permeability. Involved in neuronal progenitor cell division and differentiation. Involved in the migration of precerebellar neurons. This chain is Rho guanine nucleotide exchange factor 2 (Arhgef2), found in Mus musculus (Mouse).